A 636-amino-acid polypeptide reads, in one-letter code: Dehydrogenase ARMGADRAFT_1018426 (636 aa).

An N-terminal signal peptide occupies residues 1–19 (MPALTYLLLAAIGASTVHS). Residues 49 to 50 (TA) and 70 to 71 (EG) contribute to the FAD site. Asn99 carries N-linked (GlcNAc...) asparagine glycosylation. FAD-binding positions include Trp104 and 134–137 (NGLT). The N-linked (GlcNAc...) asparagine glycan is linked to Asn253. Val280 contacts FAD. Asn333, Asn380, Asn394, and Asn498 each carry an N-linked (GlcNAc...) asparagine glycan. The active-site Proton acceptor is His570. Residues Ala603 and 614 to 615 (PS) contribute to the FAD site.

This sequence belongs to the GMC oxidoreductase family. FAD is required as a cofactor.

It participates in secondary metabolite biosynthesis. Functionally, dehydrogenase, part of the gene cluster that mediates the biosynthesis of melleolides, a range of antifungal and phytotoxic polyketide derivatives composed of an orsellinic acid (OA) moiety esterified to various sesquiterpene alcohols. The first step in melleolides biosynthesis is performed by the delta(6)-protoilludene synthase PRO1 which catalyzes the cyclization of farnesyl diphosphate to protoilludene. The orsellinic acid synthase armB produces OA by condensing acetyl-CoA with 3 malonyl-CoA units in a three-round chain elongation reaction folowed by a C2-C7 ring closure. ArmB further catalyzes the trans-esterification of OA to the various sesquiterpene alcohols resulting from the hydroxylation of protoilludene. The melleolides cluster also includes 5 cytochrome P450 monooxygenases, 4 NAD(+)-dependent oxidoreductases, one flavin-dependent oxidoreductase, and one O-methyltransferase. The cytochrome P450 monooxygenases may be involved in protoilludene hydroxylation to elaborate melleolides with multiple alcohol groups, such as melleolide D, which carries alcohol functionalities at C-4, C-5, C-10, and C-13. The role of the NAD(+)-dependent enzymes remains unknown. Numerous melleolides, including arnamial, show 5'-O-methylation of the aromatic moiety which may be catalyzed by the methyltransferase encoded in the cluster. The flavin-dependent oxidoreductase might represent the dehydrogenase yielding the aldehyde in position 1 of arnamial and other melleolides. Finally, several halogenase localized outside of the cluster, are able to catalyze the transfer of a single chlorine atom to the melleolide backbone, resulting in a 6'-chloromelleolide product. The sequence is that of Dehydrogenase ARMGADRAFT_1018426 from Armillaria gallica (Bulbous honey fungus).